Here is a 297-residue protein sequence, read N- to C-terminus: MMNLKAVIPVAGLGMHMLPATKAIPKEMLPIVDKPMIQYIVDEIVAAGIKEIVLVTHASKNAVENHFDTSYELESLLEQRVKRQLLAEVQSICPPGVTIMNVRQAQPLGLGHSILCARPVVGDNPFIVVLPDIIIDDATADPLRYNLAAMVARFNETGRSQVLAKRMKGDLSEYSVIQTKEPLDNEGKVSRIVEFIEKPDQPQTLDSDLMAVGRYVLSADIWAELERTEPGAWGRIQLTDAIAELAKKQSVDAMLMTGDSYDCGKKMGYMQAFVKYGLRNLKEGAKFRKSIEQLLHE.

It belongs to the UDPGP type 2 family.

The enzyme catalyses alpha-D-glucose 1-phosphate + UTP + H(+) = UDP-alpha-D-glucose + diphosphate. Its pathway is carbohydrate metabolism; nucleotide-sugar metabolism. It functions in the pathway bacterial outer membrane biogenesis; lipopolysaccharide biosynthesis. In terms of biological role, may play a role in stationary phase survival. This is UTP--glucose-1-phosphate uridylyltransferase (galF) from Salmonella typhimurium (strain LT2 / SGSC1412 / ATCC 700720).